Here is a 79-residue protein sequence, read N- to C-terminus: Defensin-like protein 54 (79 aa).

The signal sequence occupies residues 1 to 27; it reads MGIKKTSATVFLVIILTISFSYYDVEA. Disulfide bonds link Cys39–Cys76, Cys43–Cys67, Cys52–Cys74, and Cys56–Cys75.

Belongs to the DEFL family.

Its subcellular location is the secreted. The sequence is that of Defensin-like protein 54 from Arabidopsis thaliana (Mouse-ear cress).